Consider the following 80-residue polypeptide: MSQEAILEKVRSIVAEQLSVDAGEVKPESNFQNDLGADSLDTVELVMALEEAFDIEIPDESAEGILTVGDAVKYIEDKQA.

In terms of domain architecture, Carrier spans 4–79 (EAILEKVRSI…DAVKYIEDKQ (76 aa)). An O-(pantetheine 4'-phosphoryl)serine modification is found at S39.

This sequence belongs to the acyl carrier protein (ACP) family. Post-translationally, 4'-phosphopantetheine is transferred from CoA to a specific serine of apo-ACP by AcpS. This modification is essential for activity because fatty acids are bound in thioester linkage to the sulfhydryl of the prosthetic group.

The protein resides in the cytoplasm. It functions in the pathway lipid metabolism; fatty acid biosynthesis. Its function is as follows. Carrier of the growing fatty acid chain in fatty acid biosynthesis. The sequence is that of Acyl carrier protein from Synechococcus sp. (strain CC9902).